A 150-amino-acid chain; its full sequence is Nucleoside diphosphate kinase (150 aa).

Residues Lys10, Phe58, Arg86, Thr92, Arg103, and Asn113 each contribute to the ATP site. The active-site Pros-phosphohistidine intermediate is the His116.

Belongs to the NDK family. In terms of assembly, homohexamer. The cofactor is Mg(2+).

The enzyme catalyses a 2'-deoxyribonucleoside 5'-diphosphate + ATP = a 2'-deoxyribonucleoside 5'-triphosphate + ADP. It catalyses the reaction a ribonucleoside 5'-diphosphate + ATP = a ribonucleoside 5'-triphosphate + ADP. Major role in the synthesis of nucleoside triphosphates other than ATP. The ATP gamma phosphate is transferred to the NDP beta phosphate via a ping-pong mechanism, using a phosphorylated active-site intermediate. This Drosophila yakuba (Fruit fly) protein is Nucleoside diphosphate kinase (awd).